Consider the following 271-residue polypeptide: MLATSDLWFRYQNEPVLKGLNMDFSLSPVTGLVGANGCGKSTLFMNLSGLLRPQKGAVLWQGKPLDYSKRGLLALRQQVATVFQDPEQQIFYTDIDSDIAFSLRNLGVPEAEITRRVDEALTLVDAQHFRHQPIQCLSHGQKKRVAIAGALVLQARYLLLDEPTAGLDPAGRTQMIAIIRRIVAQGNHVIISSHDIDLIYEISDAVYVLRQGQILTHGAPGEVFACTEAMEHAGLTQPWLVKLHTQLGLPLCKTETEFFHRMQKCAFREAS.

The ABC transporter domain occupies 2-236; that stretch reads LATSDLWFRY…TEAMEHAGLT (235 aa). 34–41 provides a ligand contact to ATP; it reads GANGCGKS.

Belongs to the ABC transporter superfamily. Cobalt importer (TC 3.A.1.18.1) family. As to quaternary structure, forms an energy-coupling factor (ECF) transporter complex composed of an ATP-binding protein (A component, CbiO), a transmembrane protein (T component, CbiQ) and 2 possible substrate-capture proteins (S components, CbiM and CbiN) of unknown stoichimetry. Expression of just CbiMN in E.coli confers some cobalt uptake.

The protein localises to the cell inner membrane. Its pathway is cofactor biosynthesis; adenosylcobalamin biosynthesis. Functionally, part of the energy-coupling factor (ECF) transporter complex CbiMNOQ involved in cobalt import. The complex confers cobalt uptake upon expression in E.coli; can also transport nickel with a very low affinity. Presumably responsible for energy coupling to the transport system. The chain is Cobalt import ATP-binding protein CbiO from Salmonella typhimurium (strain LT2 / SGSC1412 / ATCC 700720).